The sequence spans 206 residues: Probable nicotinate-nucleotide adenylyltransferase (206 aa).

This sequence belongs to the NadD family.

It carries out the reaction nicotinate beta-D-ribonucleotide + ATP + H(+) = deamido-NAD(+) + diphosphate. The protein operates within cofactor biosynthesis; NAD(+) biosynthesis; deamido-NAD(+) from nicotinate D-ribonucleotide: step 1/1. Functionally, catalyzes the reversible adenylation of nicotinate mononucleotide (NaMN) to nicotinic acid adenine dinucleotide (NaAD). In Gloeobacter violaceus (strain ATCC 29082 / PCC 7421), this protein is Probable nicotinate-nucleotide adenylyltransferase.